A 579-amino-acid chain; its full sequence is Folliculin (579 aa).

Residues 32–82 are disordered; it reads GAGSGDSPGQVEQAEEEEGGIQMSSRVRAHSPAEGASTDSSSPGPKKSDMC. Phosphoserine is present on residues S62 and S73. The 157-residue stretch at 86–242 folds into the uDENN FLCN/SMCR8-type domain; the sequence is RSLAVGHPGY…RNGNAARSLT (157 aa). A coiled-coil region spans residues 287 to 310; that stretch reads EKLADLEEESESWDNSEAEEEEKA. Positions 294–308 are enriched in acidic residues; that stretch reads EESESWDNSEAEEEE. A disordered region spans residues 294-320; the sequence is EESESWDNSEAEEEEKAPATAEGAEGR. S302, S406, S537, S542, and S571 each carry phosphoserine. The 153-residue stretch at 339–491 folds into the cDENN FLCN/SMCR8-type domain; the sequence is QPPKLSVFKS…ILNKMEAALT (153 aa). The region spanning 493–558 is the dDENN FLCN/SMCR8-type domain; it reads QNLSVDVVDQ…LLKFWMTGLS (66 aa).

Belongs to the folliculin family. Interacts (via C-terminus) with FNIP1 or FNIP2 (via C-terminus). Component of the lysosomal folliculin complex (LFC), composed of FLCN, FNIP1 (or FNIP2), RagA/RRAGA or RagB/RRAGB GDP-bound, RagC/RRAGC or RagD/RRAGD GTP-bound, and Ragulator. Interaction with FNIP1 or FNIP2 mediates indirect interaction with the PRKAA1, PRKAB1 and PRKAG1 subunits of 5'-AMP-activated protein kinase (AMPK). Interacts with HSP90AA1 in the presence of FNIP1. Interacts with HSP70, STUB1, CDC37, AHSA1, CCT2, STIP1, PTGES3 and PPP5C. Interacts with GABARAP; interaction takes place in the presence of FNIP1 and/or FNIP2. Interacts with RILP; the interaction is direct and promotes association between RILP and RAB34. Interacts with KIF3A and KIF3B. Interacts with lactate dehydrogenase LDHA, but not LDHB; the interaction is direct, may preferentially bind LDHA dimers rather than tetramers, and regulates LDHA activity, acting as an uncompetitive inhibitor. Post-translationally, phosphorylation by ULK1 modulates the interaction with GABARAP and is required to regulate autophagy. In terms of tissue distribution, expressed in kidney.

It is found in the lysosome membrane. Its subcellular location is the cytoplasm. The protein resides in the cytosol. It localises to the cell projection. The protein localises to the cilium. It is found in the cytoskeleton. Its subcellular location is the microtubule organizing center. The protein resides in the centrosome. It localises to the spindle. The protein localises to the nucleus. With respect to regulation, GTPase-activating activity is inhibited in the folliculin complex (LFC), which stabilizes the GDP-bound state of RagA/RRAGA (or RagB/RRAGB), because Arg-164 is located far from the RagC/RRAGC or RagD/RRAGD nucleotide pocket. Disassembly of the LFC complex upon amino acid restimulation liberates the GTPase-activating activity. Its function is as follows. Multi-functional protein, involved in both the cellular response to amino acid availability and in the regulation of glycolysis. GTPase-activating protein that plays a key role in the cellular response to amino acid availability through regulation of the non-canonical mTORC1 signaling cascade controlling the MiT/TFE factors TFEB and TFE3. Activates mTORC1 by acting as a GTPase-activating protein: specifically stimulates GTP hydrolysis by RagC/RRAGC or RagD/RRAGD, promoting the conversion to the GDP-bound state of RagC/RRAGC or RagD/RRAGD, and thereby activating the kinase activity of mTORC1. The GTPase-activating activity is inhibited during starvation and activated in presence of nutrients. Acts as a key component for non-canonical mTORC1-dependent control of the MiT/TFE factors TFEB and TFE3, while it is not involved in mTORC1-dependent phosphorylation of canonical RPS6KB1/S6K1 and EIF4EBP1/4E-BP1. In low-amino acid conditions, the lysosomal folliculin complex (LFC) is formed on the membrane of lysosomes, which inhibits the GTPase-activating activity of FLCN, inactivates mTORC1 and maximizes nuclear translocation of TFEB and TFE3. Upon amino acid restimulation, RagA/RRAGA (or RagB/RRAGB) nucleotide exchange promotes disassembly of the LFC complex and liberates the GTPase-activating activity of FLCN, leading to activation of mTORC1 and subsequent cytoplasmic retention of TFEB and TFE3. Indirectly acts as a positive regulator of Wnt signaling by promoting mTOR-dependent cytoplasmic retention of MiT/TFE factor TFE3. Required for the exit of hematopoietic stem cell from pluripotency by promoting mTOR-dependent cytoplasmic retention of TFE3, thereby increasing Wnt signaling. Involved in the control of embryonic stem cells differentiation; together with LAMTOR1 it is necessary to recruit and activate RagC/RRAGC and RagD/RRAGD at the lysosomes, and to induce exit of embryonic stem cells from pluripotency via non-canonical, mTOR-independent TFE3 inactivation. Acts as an inhibitor of browning of adipose tissue by regulating mTOR-dependent cytoplasmic retention of TFE3. In response to flow stress, regulates STK11/LKB1 accumulation and mTORC1 activation through primary cilia: may act by recruiting STK11/LKB1 to primary cilia for activation of AMPK resided at basal bodies, causing mTORC1 down-regulation. Together with FNIP1 and/or FNIP2, regulates autophagy: following phosphorylation by ULK1, interacts with GABARAP and promotes autophagy. Required for starvation-induced perinuclear clustering of lysosomes by promoting association of RILP with its effector RAB34. Regulates glycolysis by binding to lactate dehydrogenase LDHA, acting as an uncompetitive inhibitor. This Rattus norvegicus (Rat) protein is Folliculin.